Here is a 602-residue protein sequence, read N- to C-terminus: NADH-quinone oxidoreductase subunit C/D (602 aa).

Residues 1-192 are NADH dehydrogenase I subunit C; sequence MVNNMTDLTA…DPFELTKAKQ (192 aa). Residues 216-602 are NADH dehydrogenase I subunit D; the sequence is DFMFLNLGPN…IDFVMSDVDR (387 aa).

The protein in the N-terminal section; belongs to the complex I 30 kDa subunit family. It in the C-terminal section; belongs to the complex I 49 kDa subunit family. As to quaternary structure, NDH-1 is composed of 13 different subunits. Subunits NuoB, CD, E, F, and G constitute the peripheral sector of the complex.

The protein resides in the cell inner membrane. The catalysed reaction is a quinone + NADH + 5 H(+)(in) = a quinol + NAD(+) + 4 H(+)(out). Functionally, NDH-1 shuttles electrons from NADH, via FMN and iron-sulfur (Fe-S) centers, to quinones in the respiratory chain. The immediate electron acceptor for the enzyme in this species is believed to be ubiquinone. Couples the redox reaction to proton translocation (for every two electrons transferred, four hydrogen ions are translocated across the cytoplasmic membrane), and thus conserves the redox energy in a proton gradient. In Klebsiella pneumoniae subsp. pneumoniae (strain ATCC 700721 / MGH 78578), this protein is NADH-quinone oxidoreductase subunit C/D.